The sequence spans 470 residues: Ribosomal protein uS12 methylthiotransferase RimO (470 aa).

The MTTase N-terminal domain occupies 33–143; sequence NKIGFVSLGC…VLEHVHQYAP (111 aa). Residues Cys-42, Cys-78, Cys-107, Cys-175, Cys-179, and Cys-182 each contribute to the [4Fe-4S] cluster site. Positions 161–398 constitute a Radical SAM core domain; that stretch reads LTPKHYAYLK…MLVQQEISAA (238 aa). Residues 401–467 form the TRAM domain; it reads QKRIGSTMQV…EYDLWGSILH (67 aa).

This sequence belongs to the methylthiotransferase family. RimO subfamily. [4Fe-4S] cluster serves as cofactor.

The protein resides in the cytoplasm. It carries out the reaction L-aspartate(89)-[ribosomal protein uS12]-hydrogen + (sulfur carrier)-SH + AH2 + 2 S-adenosyl-L-methionine = 3-methylsulfanyl-L-aspartate(89)-[ribosomal protein uS12]-hydrogen + (sulfur carrier)-H + 5'-deoxyadenosine + L-methionine + A + S-adenosyl-L-homocysteine + 2 H(+). In terms of biological role, catalyzes the methylthiolation of an aspartic acid residue of ribosomal protein uS12. This Vibrio cholerae serotype O1 (strain ATCC 39315 / El Tor Inaba N16961) protein is Ribosomal protein uS12 methylthiotransferase RimO.